The following is a 192-amino-acid chain: Ion-translocating oxidoreductase complex subunit A (192 aa).

The next 6 helical transmembrane spans lie at 5–25 (LLLLVGTVLVNNFVLVKFLGL), 39–59 (IGMSMATTFVLTLASILSYLV), 72–92 (LRTMAFILVIAVVVQFTEMLV), 102–122 (ALGIYLPLITTNCAVLGVALL), 134–154 (AIYGFGAAVGFSIVLILFSAM), and 171–191 (AIAMITAGLMSLAFMGFTGLV).

The protein belongs to the NqrDE/RnfAE family. The complex is composed of six subunits: RnfA, RnfB, RnfC, RnfD, RnfE and RnfG.

Its subcellular location is the cell inner membrane. Its function is as follows. Part of a membrane-bound complex that couples electron transfer with translocation of ions across the membrane. This Shewanella loihica (strain ATCC BAA-1088 / PV-4) protein is Ion-translocating oxidoreductase complex subunit A.